Here is a 224-residue protein sequence, read N- to C-terminus: Menaquinol:cytochrome c reductase cytochrome b subunit (224 aa).

The chain crosses the membrane as a helical span at residues 37–57; it reads FSAFVYCFGGLTFFVTVIQIL. A heme b-binding site is contributed by Tyr42. Cys43 lines the heme c pocket. Heme b is bound by residues Arg91, His94, His108, and Arg111. 3 helical membrane passes run 96–116, 126–146, and 195–215; these read WGAS…FFQG, WIVG…GYLL, and IHVF…FLMI. Residues His196 and His211 each contribute to the heme b site. Positions 216 and 220 each coordinate heme c. Ser221 lines the heme b pocket.

The protein belongs to the cytochrome b family. The main subunits of the menaquinol:cytochrome c complex are a Rieske-type iron-sulfur protein (QcrA), a cytochrome b (QcrB) and a cytochrome c (QcrC). Requires heme b as cofactor. It depends on heme c as a cofactor.

It is found in the cell membrane. Component of the menaquinol:cytochrome c reductase complex. The polypeptide is Menaquinol:cytochrome c reductase cytochrome b subunit (qcrB) (Geobacillus thermodenitrificans).